A 193-amino-acid polypeptide reads, in one-letter code: 3-isopropylmalate dehydratase small subunit (193 aa).

The protein belongs to the LeuD family. LeuD type 1 subfamily. In terms of assembly, heterodimer of LeuC and LeuD.

The enzyme catalyses (2R,3S)-3-isopropylmalate = (2S)-2-isopropylmalate. It functions in the pathway amino-acid biosynthesis; L-leucine biosynthesis; L-leucine from 3-methyl-2-oxobutanoate: step 2/4. In terms of biological role, catalyzes the isomerization between 2-isopropylmalate and 3-isopropylmalate, via the formation of 2-isopropylmaleate. This chain is 3-isopropylmalate dehydratase small subunit, found in Bacillus cytotoxicus (strain DSM 22905 / CIP 110041 / 391-98 / NVH 391-98).